The chain runs to 329 residues: NADH-quinone oxidoreductase subunit H (329 aa).

Transmembrane regions (helical) follow at residues Leu9–Ile29, Gly42–Phe62, Phe75–Ile95, Ile117–Gly137, Ile154–Val174, Gly188–Ala208, Leu238–Ile258, Trp269–Trp291, and Trp309–Ile329.

It belongs to the complex I subunit 1 family. NDH-1 is composed of 14 different subunits. Subunits NuoA, H, J, K, L, M, N constitute the membrane sector of the complex.

It localises to the cell inner membrane. The enzyme catalyses a quinone + NADH + 5 H(+)(in) = a quinol + NAD(+) + 4 H(+)(out). Functionally, NDH-1 shuttles electrons from NADH, via FMN and iron-sulfur (Fe-S) centers, to quinones in the respiratory chain. The immediate electron acceptor for the enzyme in this species is believed to be ubiquinone. Couples the redox reaction to proton translocation (for every two electrons transferred, four hydrogen ions are translocated across the cytoplasmic membrane), and thus conserves the redox energy in a proton gradient. This subunit may bind ubiquinone. This is NADH-quinone oxidoreductase subunit H from Helicobacter pylori (strain J99 / ATCC 700824) (Campylobacter pylori J99).